The primary structure comprises 289 residues: Diaminopimelate epimerase (289 aa).

N11 and N78 together coordinate substrate. C87 (proton donor) is an active-site residue. Substrate-binding positions include 88 to 89, N163, N199, and 217 to 218; these read GN and ER. C226 acts as the Proton acceptor in catalysis. 227–228 is a binding site for substrate; the sequence is GT.

This sequence belongs to the diaminopimelate epimerase family. As to quaternary structure, homodimer.

Its subcellular location is the cytoplasm. It catalyses the reaction (2S,6S)-2,6-diaminopimelate = meso-2,6-diaminopimelate. It functions in the pathway amino-acid biosynthesis; L-lysine biosynthesis via DAP pathway; DL-2,6-diaminopimelate from LL-2,6-diaminopimelate: step 1/1. Catalyzes the stereoinversion of LL-2,6-diaminopimelate (L,L-DAP) to meso-diaminopimelate (meso-DAP), a precursor of L-lysine and an essential component of the bacterial peptidoglycan. The polypeptide is Diaminopimelate epimerase (Mycobacterium bovis (strain ATCC BAA-935 / AF2122/97)).